A 343-amino-acid chain; its full sequence is D-alanine--D-alanine ligase (343 aa).

The 207-residue stretch at 129–335 folds into the ATP-grasp domain; it reads KYVLEHFNIK…YSKLIDELIE (207 aa). 162-217 is a binding site for ATP; it reads ENKLGYAVFIKPSNSGSSVGITKAHNRKELEAGLEEAMKYDRKILVEEALNAREIE. Residues aspartate 288, glutamate 302, and asparagine 304 each coordinate Mg(2+).

Belongs to the D-alanine--D-alanine ligase family. Mg(2+) is required as a cofactor. It depends on Mn(2+) as a cofactor.

It is found in the cytoplasm. It carries out the reaction 2 D-alanine + ATP = D-alanyl-D-alanine + ADP + phosphate + H(+). It functions in the pathway cell wall biogenesis; peptidoglycan biosynthesis. Cell wall formation. The polypeptide is D-alanine--D-alanine ligase (Clostridium acetobutylicum (strain ATCC 824 / DSM 792 / JCM 1419 / IAM 19013 / LMG 5710 / NBRC 13948 / NRRL B-527 / VKM B-1787 / 2291 / W)).